An 846-amino-acid chain; its full sequence is Inactive cap-specific mRNA (nucleoside-2'-O-)-methyltransferase 1B (846 aa).

Positions 30-50 (DDEDDFVDDPSPTEQKTKAEK) are disordered. The 47-residue stretch at 44 to 90 (QKTKAEKKMERMGYKAGEGLGKNKQGIQEPIAISFREGKAGLGHEQW) folds into the G-patch domain. A RrmJ-type SAM-dependent 2'-O-MTase domain is found at 184-413 (FFLNRSAMKT…ERFVVCKGLR (230 aa)).

The protein is Inactive cap-specific mRNA (nucleoside-2'-O-)-methyltransferase 1B of Caenorhabditis briggsae.